The sequence spans 149 residues: Protein SprT-like (149 aa).

The SprT-like domain maps to 5 to 143 (DYVKQVSLED…CGLCRGKLLL (139 aa)). Residue His-64 participates in Zn(2+) binding. Residue Glu-65 is part of the active site. Residue His-68 participates in Zn(2+) binding.

This sequence belongs to the SprT family. Zn(2+) is required as a cofactor.

Its subcellular location is the cytoplasm. This chain is Protein SprT-like, found in Streptococcus pneumoniae (strain Hungary19A-6).